Here is a 301-residue protein sequence, read N- to C-terminus: Protoheme IX farnesyltransferase 2 (301 aa).

Helical transmembrane passes span 29 to 49 (VVAL…PTAV), 51 to 71 (VQPL…AAAL), 101 to 121 (ALIF…VLVN), 123 to 143 (LTAW…TAYL), 150 to 170 (NIVI…TAVT), 177 to 197 (ALLL…ALAI), 223 to 243 (CILL…LVGM), 244 to 264 (CGPM…YKAW), and 281 to 301 (FSIY…YLWS).

The protein belongs to the UbiA prenyltransferase family. Protoheme IX farnesyltransferase subfamily.

Its subcellular location is the cell inner membrane. The catalysed reaction is heme b + (2E,6E)-farnesyl diphosphate + H2O = Fe(II)-heme o + diphosphate. The protein operates within porphyrin-containing compound metabolism; heme O biosynthesis; heme O from protoheme: step 1/1. Functionally, converts heme B (protoheme IX) to heme O by substitution of the vinyl group on carbon 2 of heme B porphyrin ring with a hydroxyethyl farnesyl side group. This Shewanella sp. (strain W3-18-1) protein is Protoheme IX farnesyltransferase 2.